Consider the following 535-residue polypeptide: Alpha-1,3-mannosyl-glycoprotein 4-beta-N-acetylglucosaminyltransferase A (535 aa).

At 1 to 6 (MRLRNG) the chain is on the cytoplasmic side. Residues 7–27 (TVATALVFVTSFLTLSWYTTW) form a helical; Signal-anchor for type II membrane protein membrane-spanning segment. Residues 28–63 (QNGKEKLIAYQREFLALKERLRVAEHRISQRSSELN) are a coiled coil. Residues 28-535 (QNGKEKLIAY…NEIHIKKVTS (508 aa)) lie on the Lumenal side of the membrane. Residues Asn-77 and Asn-458 are each glycosylated (N-linked (GlcNAc...) asparagine). Position 474 is a phosphoserine (Ser-474).

Belongs to the glycosyltransferase 54 family. A divalent metal cation serves as cofactor. Post-translationally, N-glycosylated.

Its subcellular location is the golgi apparatus membrane. The protein resides in the secreted. It catalyses the reaction N(4)-{beta-D-GlcNAc-(1-&gt;2)-alpha-D-Man-(1-&gt;3)-[beta-D-GlcNAc-(1-&gt;2)-alpha-D-Man-(1-&gt;6)]-beta-D-Man-(1-&gt;4)-beta-D-GlcNAc-(1-&gt;4)-beta-D-GlcNAc}-L-asparaginyl-[protein] + UDP-N-acetyl-alpha-D-glucosamine = N(4)-{beta-D-GlcNAc-(1-&gt;2)-[beta-D-GlcNAc-(1-&gt;4)]-alpha-D-Man-(1-&gt;3)-[beta-D-GlcNAc-(1-&gt;2)-alpha-D-Man-(1-&gt;6)]-beta-D-Man-(1-&gt;4)-beta-D-GlcNAc-(1-&gt;4)-beta-D-GlcNAc}-L-asparaginyl-[protein] + UDP + H(+). It carries out the reaction an N(4)-{beta-D-GlcNAc-(1-&gt;2)-alpha-D-Man-(1-&gt;3)-[alpha-D-Man-(1-&gt;6)]-beta-D-Man-(1-&gt;4)-beta-D-GlcNAc-(1-&gt;4)-beta-D-GlcNAc}-L-asparaginyl-[protein] + UDP-N-acetyl-alpha-D-glucosamine = an N(4)-{beta-D-GlcNAc-(1-&gt;2)-[beta-D-GlcNAc-(1-&gt;4)]-alpha-D-Man-(1-&gt;3)-[alpha-D-Man-(1-&gt;6)]-beta-D-Man-(1-&gt;4)-beta-D-GlcNAc-(1-&gt;4)-beta-D-GlcNAc}-L-asparaginyl-[protein] + UDP + H(+). The catalysed reaction is an N(4)-{beta-D-GlcNAc-(1-&gt;2)-alpha-D-Man-(1-&gt;3)-[beta-D-GlcNAc-(1-&gt;2)-[beta-D-GlcNAc-(1-&gt;6)]-alpha-D-Man-(1-&gt;6)]-beta-D-Man-(1-&gt;4)-beta-D-GlcNAc-(1-&gt;4)-beta-D-GlcNAc}-L-asparaginyl-[protein] + UDP-N-acetyl-alpha-D-glucosamine = an N(4)-{beta-D-GlcNAc-(1-&gt;2)-[beta-D-GlcNAc-(1-&gt;4)]-alpha-D-Man-(1-&gt;3)-[beta-D-GlcNAc-(1-&gt;2)-[beta-D-GlcNAc-(1-&gt;6)]-alpha-D-Man-(1-&gt;6)]-beta-D-Man-(1-&gt;4)-beta-D-GlcNAc-(1-&gt;4)-beta-D-GlcNAc}-L-asparaginyl-[protein] + UDP + H(+). The enzyme catalyses an N(4)-{beta-D-GlcNAc-(1-&gt;2)-alpha-D-Man-(1-&gt;3)-[beta-D-GlcNAc-(1-&gt;2)-alpha-D-Man-(1-&gt;6)]-beta-D-Man-(1-&gt;4)-beta-D-GlcNAc-(1-&gt;4)-[alpha-L-Fuc-(1-&gt;6)]-beta-D-GlcNAc}-L-asparaginyl-[protein] + UDP-N-acetyl-alpha-D-glucosamine = N(4)-{beta-D-GlcNAc-(1-&gt;2)-[beta-D-GlcNAc-(1-&gt;4)]-alpha-D-Man-(1-&gt;3)-[beta-D-GlcNAc-(1-&gt;2)-alpha-D-Man-(1-&gt;6)]-beta-D-Man-(1-&gt;4)-beta-D-GlcNAc-(1-&gt;4)-[alpha-L-Fuc-(1-&gt;6)]-beta-D-GlcNAc}-asparaginyl-[protein] + UDP + H(+). It catalyses the reaction an N(4)-{beta-D-GlcNAc-(1-&gt;2)-alpha-D-Man-(1-&gt;3)-[beta-D-Gal-(1-&gt;4)-beta-D-GlcNAc-(1-&gt;2)-alpha-D-Man-(1-&gt;6)]-beta-D-Man-(1-&gt;4)-beta-D-GlcNAc-(1-&gt;4)-beta-D-GlcNAc}-L-asparaginyl-[protein] + UDP-N-acetyl-alpha-D-glucosamine = an N(4)-{beta-D-GlcNAc-(1-&gt;2)-[beta-D-GlcNAc-(1-&gt;4)]-alpha-D-Man-(1-&gt;3)-[beta-D-Gal-(1-&gt;4)-beta-D-GlcNAc-(1-&gt;2)-alpha-D-Man-(1-&gt;6)]-beta-D-Man-(1-&gt;4)-beta-D-GlcNAc-(1-&gt;4)-beta-D-GlcNAc}-L-asparaginyl-[protein] + UDP + H(+). It carries out the reaction N(4)-{beta-D-GlcNAc-(1-&gt;2)-alpha-D-Man-(1-&gt;3)-[alpha-D-Man-(1-&gt;3)-{alpha-D-Man-(1-&gt;6)}-alpha-D-Man-(1-&gt;6)]-beta-D-Man-(1-&gt;4)-beta-D-GlcNAc-(1-&gt;4)-beta-D-GlcNAc}-asparaginyl-[protein] + UDP-N-acetyl-alpha-D-glucosamine = N(4)-{beta-D-GlcNAc-(1-&gt;2)-[beta-D-GlcNAc-(1-&gt;4)]-alpha-D-Man-(1-&gt;3)-[alpha-D-Man-(1-&gt;3)-{alpha-D-Man-(1-&gt;6)}-alpha-D-Man-(1-&gt;6)]-beta-D-Man-(1-&gt;4)-beta-D-GlcNAc-(1-&gt;4)-beta-D-GlcNAc}-asparaginyl-[protein] + UDP + H(+). The catalysed reaction is N(4)-{beta-D-GlcNAc-(1-&gt;2)-alpha-D-Man-(1-&gt;3)-beta-D-Man-(1-&gt;4)-beta-D-GlcNAc-(1-&gt;4)-beta-D-GlcNAc}-asparaginyl-[protein] + UDP-N-acetyl-alpha-D-glucosamine = N(4)-{beta-D-GlcNAc-(1-&gt;2)-[beta-D-GlcNAc-(1-&gt;4)]-alpha-D-Man-(1-&gt;3)-beta-D-Man-(1-&gt;4)-beta-D-GlcNAc-(1-&gt;4)-beta-D-GlcNAc}-asparaginyl-[protein] + UDP + H(+). It participates in protein modification; protein glycosylation. Its activity is regulated as follows. Inhibited by UDP. In terms of biological role, glycosyltransferase that catalyze the transfer of GlcNAc from UDP-GlcNAc to the GlcNAcbeta1-2Manalpha1-3 arm of the core structure of N-linked glycans through a beta1-4 linkage and participates in the production of tri- and tetra-antennary N-linked sugar chains. Involved in glucose transport by mediating SLC2A2/GLUT2 glycosylation, thereby controlling cell-surface expression of SLC2A2 in pancreatic beta cells. The sequence is that of Alpha-1,3-mannosyl-glycoprotein 4-beta-N-acetylglucosaminyltransferase A from Mus musculus (Mouse).